The sequence spans 346 residues: Histone PARylation factor 1 (346 aa).

Met1 bears the N-acetylmethionine mark. The tract at residues 1-23 (MVGGGGKRRPGGEGPQCEKTTDV) is disordered. The residue at position 19 (Lys19) is an N6-acetyllysine. Residue Ser97 is modified to ADP-ribosylserine. N6-acetyllysine is present on residues Lys186 and Lys233. PolyADP-ribosyl aspartic acid is present on Asp235. Tyr238 carries the ADP-ribosyltyrosine modification. The residue at position 240 (Glu240) is a PolyADP-ribosyl glutamic acid. The tract at residues 242-346 (PETDADLKRI…SQENIDQLAA (105 aa)) is interaction with PARP1. Glu284 functions as the Proton donor in the catalytic mechanism.

It belongs to the HPF1 family. Interacts with PARP1 (via the PARP catalytic domain). Interacts with PARP2 (via the PARP catalytic domain). Interacts with core nucleosomes in a PARP1- and PARP2-dependent manner.

It localises to the chromosome. The protein localises to the nucleus. Cofactor for serine ADP-ribosylation that confers serine specificity on PARP1 and PARP2 and plays a key role in DNA damage response. Initiates the repair of double-strand DNA breaks: recruited to DNA damage sites by PARP1 and PARP2 and switches the amino acid specificity of PARP1 and PARP2 from aspartate or glutamate to serine residues, licensing serine ADP-ribosylation of target proteins. Serine ADP-ribosylation of target proteins, such as histones, promotes decompaction of chromatin and the recruitment of repair factors leading to the reparation of DNA strand breaks. Serine ADP-ribosylation of proteins constitutes the primary form of ADP-ribosylation of proteins in response to DNA damage. HPF1 acts by completing the active site of PARP1 and PARP2: forms a composite active site composed of residues from HPF1 and PARP1 or PARP2. While HPF1 promotes the initiation of serine ADP-ribosylation, it restricts the polymerase activity of PARP1 and PARP2 in order to limit the length of poly-ADP-ribose chains. HPF1 also promotes tyrosine ADP-ribosylation, probably by conferring tyrosine specificity on PARP1. This chain is Histone PARylation factor 1, found in Homo sapiens (Human).